The following is a 498-amino-acid chain: Protein flp (498 aa).

The next 4 membrane-spanning stretches (helical) occupy residues 6-26 (LYFL…IYIT), 389-409 (FNIV…FSAY), 433-453 (LTLC…YLIL), and 471-491 (LALI…LLFL).

Its subcellular location is the cell membrane. Its precise function is unknown. Has no penicillin-binding activity and is not involved in methicillin resistance. The protein is Protein flp (flp) of Staphylococcus aureus (strain Mu50 / ATCC 700699).